A 524-amino-acid chain; its full sequence is Apoptosis inhibitor 5 (524 aa).

The segment at 2–360 (PTVEELYRNY…HQLGRKLPDF (359 aa)) is ARM-like and Heat-like helical repeats. The residue at position 251 (lysine 251) is an N6-acetyllysine. A leucine-zipper region spans residues 370–391 (LKDFKIRLQYFARGLQVYIRQL). A Phosphothreonine modification is found at threonine 399. The disordered stretch occupies residues 452–524 (GQKRASEDTT…RGNRSRGRLY (73 aa)). A Nuclear localization signal motif is present at residues 454-475 (KRASEDTTSGSPPKKSSAGPKR). Phosphoserine occurs at positions 462, 464, and 469. Positions 462–472 (SGSPPKKSSAG) are enriched in low complexity. A compositionally biased stretch (polar residues) spans 487-497 (KYSSNLGNFNY). The residue at position 500 (arginine 500) is an Omega-N-methylarginine.

Belongs to the API5 family. Monomer. Interacts with FGF2 and ACIN1. In terms of processing, acetylation at Lys-251 impairs antiapoptotic function. In terms of tissue distribution, expressed in all tissues tested, including heart, brain, placenta, lung, liver, skeletal muscle, kidney and pancreas. Highest levels in heart, pancreas and placenta. Highly expressed in several cancers. Preferentially expressed in squamous cell carcinoma versus adenocarcinoma in non-small cell lung cancer.

The protein resides in the nucleus. Its subcellular location is the cytoplasm. Antiapoptotic factor that may have a role in protein assembly. Negatively regulates ACIN1. By binding to ACIN1, it suppresses ACIN1 cleavage from CASP3 and ACIN1-mediated DNA fragmentation. Also known to efficiently suppress E2F1-induced apoptosis. Its depletion enhances the cytotoxic action of the chemotherapeutic drugs. The protein is Apoptosis inhibitor 5 of Homo sapiens (Human).